The chain runs to 624 residues: Protein NRT1/ PTR FAMILY 6.1 (624 aa).

Positions 1-20 are disordered; that stretch reads MVASEIKSPVSVPETPGSSS. 2 helical membrane passes run 83–100 and 114–134; these read MAYFGLSVNMVAFMFYVM and FLGISQASSVLGGFLADAYLG. Thr-138 bears the Phosphothreonine mark. Helical transmembrane passes span 139 to 159, 184 to 204, 230 to 250, 258 to 278, 378 to 398, 422 to 442, 459 to 479, 504 to 524, 537 to 557, and 585 to 605; these read IAIFTTMYLVGLIGITLGASL, SWQMLYLYTVLYITGFGAAGI, FFNFFYLSVTLGAIIAFTLVV, WGMAFGTLAVAMGISNALFFA, LIPIPTCTIMLSLVLTEYLTL, VFPGLSIFLILSLYYSVFVPI, VGIGLAVSIISVAWAGLFENY, WLLIQYCLIGIAEVFCIVGLL, SIGSAYAALAGGLGCFAATIL, and CLYWLLTLLSFLNFCVFLWSA.

The protein belongs to the major facilitator superfamily. Proton-dependent oligopeptide transporter (POT/PTR) (TC 2.A.17) family. In terms of tissue distribution, expressed in flower and siliques.

It is found in the membrane. The polypeptide is Protein NRT1/ PTR FAMILY 6.1 (NPF6.1) (Arabidopsis thaliana (Mouse-ear cress)).